Reading from the N-terminus, the 333-residue chain is Adenosine deaminase (333 aa).

2 residues coordinate Zn(2+): histidine 12 and histidine 14. 3 residues coordinate substrate: histidine 14, aspartate 16, and glycine 170. Histidine 197 is a binding site for Zn(2+). Residue glutamate 200 is the Proton donor of the active site. Aspartate 278 contacts Zn(2+). Position 279 (aspartate 279) interacts with substrate.

Belongs to the metallo-dependent hydrolases superfamily. Adenosine and AMP deaminases family. Adenosine deaminase subfamily. It depends on Zn(2+) as a cofactor.

The catalysed reaction is adenosine + H2O + H(+) = inosine + NH4(+). It carries out the reaction 2'-deoxyadenosine + H2O + H(+) = 2'-deoxyinosine + NH4(+). Catalyzes the hydrolytic deamination of adenosine and 2-deoxyadenosine. This is Adenosine deaminase from Escherichia coli (strain SE11).